The following is a 158-amino-acid chain: MQGTLSVWLAKRGLVHRSLGFDYQGIETLQIKPEDWHSIAVILYVYGYNYLRSQCAYDVAPGGLLASVYHLTRIEYGVNQAEEVCIKVFTHRSNPRIPSVFWVWKSTDFQERESYDMLGITYDSHPRLKRILMPESWIGWPLRKDYIAPNFYEIQDAY.

It belongs to the complex I 30 kDa subunit family. As to quaternary structure, NDH is composed of at least 16 different subunits, 5 of which are encoded in the nucleus.

It is found in the plastid. The protein localises to the chloroplast thylakoid membrane. The catalysed reaction is a plastoquinone + NADH + (n+1) H(+)(in) = a plastoquinol + NAD(+) + n H(+)(out). The enzyme catalyses a plastoquinone + NADPH + (n+1) H(+)(in) = a plastoquinol + NADP(+) + n H(+)(out). NDH shuttles electrons from NAD(P)H:plastoquinone, via FMN and iron-sulfur (Fe-S) centers, to quinones in the photosynthetic chain and possibly in a chloroplast respiratory chain. The immediate electron acceptor for the enzyme in this species is believed to be plastoquinone. Couples the redox reaction to proton translocation, and thus conserves the redox energy in a proton gradient. The polypeptide is NAD(P)H-quinone oxidoreductase subunit J, chloroplastic (Crucihimalaya wallichii (Rock-cress)).